An 88-amino-acid chain; its full sequence is Putative sulfur carrier protein AF_0552 (88 aa).

The protein belongs to the sulfur carrier protein CysO family.

This chain is Putative sulfur carrier protein AF_0552, found in Archaeoglobus fulgidus (strain ATCC 49558 / DSM 4304 / JCM 9628 / NBRC 100126 / VC-16).